The following is a 217-amino-acid chain: Adenylate kinase (217 aa).

10-15 is a binding site for ATP; the sequence is GAGKGT. An NMP region spans residues 30 to 59; sequence STGDIFRANIKNNTELGAKAKEYMDQGLLV. AMP-binding positions include threonine 31, arginine 36, 57 to 59, 85 to 88, and glutamine 92; these read LLV and GFPR. The interval 126–163 is LID; it reads GRRACVSCGGTYHVVFTPTKKEGICDACGGELTIRDDD. Arginine 127 lines the ATP pocket. Positions 130 and 133 each coordinate Zn(2+). 136–137 lines the ATP pocket; sequence TY. The Zn(2+) site is built by cysteine 150 and cysteine 153. The AMP site is built by arginine 160 and arginine 171. ATP is bound at residue lysine 199.

The protein belongs to the adenylate kinase family. In terms of assembly, monomer.

The protein resides in the cytoplasm. The enzyme catalyses AMP + ATP = 2 ADP. It participates in purine metabolism; AMP biosynthesis via salvage pathway; AMP from ADP: step 1/1. Catalyzes the reversible transfer of the terminal phosphate group between ATP and AMP. Plays an important role in cellular energy homeostasis and in adenine nucleotide metabolism. This chain is Adenylate kinase, found in Lachnoclostridium phytofermentans (strain ATCC 700394 / DSM 18823 / ISDg) (Clostridium phytofermentans).